Consider the following 376-residue polypeptide: E3 ubiquitin-protein ligase RNF34 (376 aa).

The FYVE-type zinc-finger motif lies at 56–107 (EGPNIVCKACGLSFSVFRKKHVCCDCKKDFCSLCSVSQENLRRCSTCHLLQE). The region spanning 115-134 (LMRLKVKDLRQYLLLRNIPT) is the SAP 1 domain. A Phosphoserine modification is found at serine 169. The segment at 216–256 (IASANTDDDDDDDDDDDDDEDDDDEQEEEEQNPGLSKKKAR) is disordered. Over residues 221 to 246 (TDDDDDDDDDDDDDEDDDDEQEEEEQ) the composition is skewed to acidic residues. A phosphoserine mark is found at serine 258 and serine 260. Positions 268–282 (VEGMSVRQLKEILAR) constitute an SAP 2 domain. The RING-type zinc-finger motif lies at 329–364 (CRICMDAVIDCVLLECGHMVTCTKCGKRMSECPICR).

As to quaternary structure, interacts with CASP8 and CASP10. Interacts with p53/TP53; involved in p53/TP53 ubiquitination. Interacts (via RING-type zinc finger) with MDM2; the interaction stabilizes MDM2. Interacts (via RING-type zinc finger) with PPARGC1A. Interacts with NOD1. Post-translationally, autoubiquitinated (in vitro). In terms of processing, proteolytically cleaved by caspases upon induction of apoptosis by TNF.

The protein resides in the cell membrane. Its subcellular location is the endomembrane system. It is found in the nucleus. The protein localises to the nucleus speckle. It localises to the cytoplasm. The protein resides in the cytosol. It catalyses the reaction S-ubiquitinyl-[E2 ubiquitin-conjugating enzyme]-L-cysteine + [acceptor protein]-L-lysine = [E2 ubiquitin-conjugating enzyme]-L-cysteine + N(6)-ubiquitinyl-[acceptor protein]-L-lysine.. It participates in protein modification; protein ubiquitination. E3 ubiquitin-protein ligase that regulates several biological processes through the ubiquitin-mediated proteasomal degradation of various target proteins. Ubiquitinates the caspases CASP8 and CASP10, promoting their proteasomal degradation, to negatively regulate cell death downstream of death domain receptors in the extrinsic pathway of apoptosis. May mediate 'Lys-48'-linked polyubiquitination of RIPK1 and its subsequent proteasomal degradation thereby indirectly regulating the tumor necrosis factor-mediated signaling pathway. Negatively regulates p53/TP53 through its direct ubiquitination and targeting to proteasomal degradation. Indirectly, may also negatively regulate p53/TP53 through ubiquitination and degradation of SFN. Mediates PPARGC1A proteasomal degradation probably through ubiquitination thereby indirectly regulating the metabolism of brown fat cells. Possibly involved in innate immunity, through 'Lys-48'-linked polyubiquitination of NOD1 and its subsequent proteasomal degradation. This is E3 ubiquitin-protein ligase RNF34 from Mus musculus (Mouse).